The primary structure comprises 89 residues: Small ribosomal subunit protein uS15 (89 aa).

Belongs to the universal ribosomal protein uS15 family. As to quaternary structure, part of the 30S ribosomal subunit. Forms a bridge to the 50S subunit in the 70S ribosome, contacting the 23S rRNA.

In terms of biological role, one of the primary rRNA binding proteins, it binds directly to 16S rRNA where it helps nucleate assembly of the platform of the 30S subunit by binding and bridging several RNA helices of the 16S rRNA. Forms an intersubunit bridge (bridge B4) with the 23S rRNA of the 50S subunit in the ribosome. This is Small ribosomal subunit protein uS15 from Gluconobacter oxydans (strain 621H) (Gluconobacter suboxydans).